Consider the following 760-residue polypeptide: UDP-N-acetylmuramoyl-L-alanyl-D-glutamate--2,6-diaminopimelate ligase MurE homolog, chloroplastic (760 aa).

The N-terminal 59 residues, 1–59, are a transit peptide targeting the chloroplast; it reads MATAPLAFRLPFPFSFPSASRPPPSRILAPPTPRRLPLRLAAAAARRFRPPTADDEPPE. Disordered stretches follow at residues 13 to 159 and 176 to 205; these read PFSF…TDEL and LSVVSVADEEDEEVEGGEDEDDGLPLDEDG. Positions 20 to 34 are enriched in pro residues; sequence SRPPPSRILAPPTPR. A compositionally biased stretch (acidic residues) spans 53–62; it reads ADDEPPEAAE. The segment covering 118–132 has biased composition (basic and acidic residues); the sequence is EIDRAIAEKREEFTR. Composition is skewed to acidic residues over residues 150–159 and 182–205; these read PEDEDLTDEL and ADEEDEEVEGGEDEDDGLPLDEDG.

It belongs to the MurCDEF family. MurE subfamily. In terms of assembly, component of the plastid-encoded plastid RNA polymerase (PEP) complex.

It is found in the plastid. The protein localises to the chloroplast. Its function is as follows. Required for the activity of the plastid-encoded RNA polymerase (PEP) and full expression of genes transcribed by PEP. Required for the proper build-up and formation of the PEP-complex. The sequence is that of UDP-N-acetylmuramoyl-L-alanyl-D-glutamate--2,6-diaminopimelate ligase MurE homolog, chloroplastic from Zea mays (Maize).